The sequence spans 196 residues: Pyridoxal 5'-phosphate synthase subunit PdxT (196 aa).

Position 47–49 (Gly47–Ser49) interacts with L-glutamine. Cys79 acts as the Nucleophile in catalysis. L-glutamine contacts are provided by residues Arg106 and Ile134–Arg135. Active-site charge relay system residues include His170 and Glu172.

The protein belongs to the glutaminase PdxT/SNO family. In the presence of PdxS, forms a dodecamer of heterodimers. Only shows activity in the heterodimer.

The enzyme catalyses aldehydo-D-ribose 5-phosphate + D-glyceraldehyde 3-phosphate + L-glutamine = pyridoxal 5'-phosphate + L-glutamate + phosphate + 3 H2O + H(+). It carries out the reaction L-glutamine + H2O = L-glutamate + NH4(+). It functions in the pathway cofactor biosynthesis; pyridoxal 5'-phosphate biosynthesis. Its function is as follows. Catalyzes the hydrolysis of glutamine to glutamate and ammonia as part of the biosynthesis of pyridoxal 5'-phosphate. The resulting ammonia molecule is channeled to the active site of PdxS. This Bacillus cereus (strain ZK / E33L) protein is Pyridoxal 5'-phosphate synthase subunit PdxT.